Reading from the N-terminus, the 498-residue chain is Thiamine transporter 1 (498 aa).

M1 is modified (N-acetylmethionine). Residues 1 to 28 (MDVPARVSRRAAAAAARMLLRTARVPRE) lie on the Cytoplasmic side of the membrane. The helical transmembrane segment at 29–46 (CWFLPTALLCAYGFFANL) threads the bilayer. Residues 47-71 (RPSEPFLTPYLLGPDKNLTERQVYN) are Extracellular-facing. N63 is a glycosylation site (N-linked (GlcNAc...) asparagine). The chain crosses the membrane as a helical span at residues 72–92 (EIYPVWTYSYLLLLFPVFLAT). The Cytoplasmic portion of the chain corresponds to 93–105 (DYLRYKPVILLQG). The helical transmembrane segment at 106-126 (LSLIVTWFMLLYAQGLLAIQF) threads the bilayer. Residues 127–128 (LE) are Extracellular-facing. Residues 129-149 (FFYGIATATEIAYYSYIYTVV) traverse the membrane as a helical segment. Residues 150–164 (DLGMYQKVTSYCRSA) lie on the Cytoplasmic side of the membrane. Residues 165–185 (TLVGFTVGSVLGQILVSVVGW) traverse the membrane as a helical segment. A topological domain (extracellular) is located at residue S186. The chain crosses the membrane as a helical span at residues 187 to 207 (LFSLNVISLTCVSVAFAVAWF). Topologically, residues 208–295 (LPMPQKSLFF…DFLMCYSSRP (88 aa)) are cytoplasmic. S222 carries the phosphoserine modification. A helical membrane pass occupies residues 296 to 316 (LLCWSVWWALSTCGYFQVVNY). Residues 317-334 (AQGLWEKVMPSQNADIYN) lie on the Extracellular side of the membrane. The chain crosses the membrane as a helical span at residues 335-355 (GGVEAVSTLLGASAVFAVGYI). Residues 356–360 (KLSWS) lie on the Cytoplasmic side of the membrane. The helical transmembrane segment at 361-381 (TWGEMTLFLCSLLIAAAVYVM) threads the bilayer. Residues 382-386 (DTVQS) are Extracellular-facing. Residues 387-407 (IWVCYASYVVFRIIYMVLITI) traverse the membrane as a helical segment. Topologically, residues 408 to 423 (ATFQIAANLSMERYAL) are cytoplasmic. The helical transmembrane segment at 424–444 (VFGVNTFIALALQTLLTLIVV) threads the bilayer. Over 445–456 (DARGLGLCITTQ) the chain is Extracellular. Residues 457–477 (FLIYASYFAAISVVFLANGIV) form a helical membrane-spanning segment. At 478-498 (SIIKKCRKQEDPSSSPQASTS) the chain is on the cytoplasmic side.

This sequence belongs to the reduced folate carrier (RFC) transporter (TC 2.A.48) family. As to quaternary structure, interacts with TSPAN1; this interaction increases the stability of SLC19A2. Interacts with TMEM63B. Expressed in liver. Expressed in cochlear hair cells and duodenum (at protein level). Detected in pancreatic acinar cells (at protein level). Also expressed strongly in pancreatic islet cells. Expressed in the testis. As to expression, very highly expressed in liver, and also detected at lower levels in heart, testis, kidney, brain and spleen. In terms of tissue distribution, expressed at low levels in liver and spleen.

The protein resides in the cell membrane. The enzyme catalyses thiamine(out) + H(+)(in) = thiamine(in) + H(+)(out). It catalyses the reaction pyridoxine(out) + n H(+)(out) = pyridoxine(in) + n H(+)(in). High-affinity transporter for the intake of thiamine. Essential for spermatogenesis. Mediates H(+)-dependent pyridoxine transport. This chain is Thiamine transporter 1, found in Mus musculus (Mouse).